The sequence spans 402 residues: Exodeoxyribonuclease 7 large subunit (402 aa).

This sequence belongs to the XseA family. Heterooligomer composed of large and small subunits.

It localises to the cytoplasm. It carries out the reaction Exonucleolytic cleavage in either 5'- to 3'- or 3'- to 5'-direction to yield nucleoside 5'-phosphates.. In terms of biological role, bidirectionally degrades single-stranded DNA into large acid-insoluble oligonucleotides, which are then degraded further into small acid-soluble oligonucleotides. The sequence is that of Exodeoxyribonuclease 7 large subunit from Moorella thermoacetica (strain ATCC 39073 / JCM 9320).